We begin with the raw amino-acid sequence, 151 residues long: MILTIKPLQGKECNVQVTEDEKVSMVKELVSERLNIPANQQRLLYKGKALADEHRLSDYSIGPEAKLNLVVRPAGERSGMASSSSAVSGVWQTLSTVLAKHFSPADAAKVQEQLVKDYERSLRQLSLDDIERLAGRLLHPDSEGMDTSYMD.

In terms of domain architecture, Ubiquitin-like spans 1-76 (MILTIKPLQG…LNLVVRPAGE (76 aa)).

Component of the BAT3 complex.

The protein resides in the cytoplasm. Its subcellular location is the cytosol. In terms of biological role, component of the BAT3 complex, a multiprotein complex involved in the post-translational delivery of tail-anchored (TA) membrane proteins to the endoplasmic reticulum membrane. TA membrane proteins, also named type II transmembrane proteins, contain a single C-terminal transmembrane region. In Salmo salar (Atlantic salmon), this protein is Ubiquitin-like protein 4A-B (ubl4ab).